The sequence spans 172 residues: Thioredoxin M5, chloroplastic (172 aa).

Residues 1-59 (MALETCFRAWATLHAPQPPSSGGSRDRLLLSGAGSSQSKPRLSVASPSPLRPASRFACQ) constitute a chloroplast transit peptide. The segment at 17–47 (QPPSSGGSRDRLLLSGAGSSQSKPRLSVASP) is disordered. Positions 60–171 (CSNVVDEVVV…LATIIDKYVS (112 aa)) constitute a Thioredoxin domain. Active-site nucleophile residues include cysteine 95 and cysteine 98. Cysteine 95 and cysteine 98 are disulfide-bonded.

Belongs to the thioredoxin family. Plant M-type subfamily. In terms of tissue distribution, expressed in leaves and at lower levels in flowers.

The protein resides in the plastid. The protein localises to the chloroplast. Thiol-disulfide oxidoreductase probably involved in the redox regulation of chloroplastic enzymes. Required for chloroplast biogenesis and differentiation. Functions as an electron donor for plastidial 2-Cys peroxiredoxins and participates in hydrogen peroxide scavenging system in chloroplasts. Possesses reducing activity towards insulin disulfide bonds. This is Thioredoxin M5, chloroplastic (TRXM) from Oryza sativa subsp. japonica (Rice).